A 297-amino-acid polypeptide reads, in one-letter code: Glycerol-3-phosphate dehydrogenase [NAD(P)+] (297 aa).

3 residues coordinate NADPH: Trp-11, Arg-33, and Lys-79. Sn-glycerol 3-phosphate contacts are provided by Lys-79, Gly-107, and Ser-109. Ala-111 provides a ligand contact to NADPH. Positions 161, 214, 224, 225, and 226 each coordinate sn-glycerol 3-phosphate. Residue Lys-161 is the Proton acceptor of the active site. Arg-225 serves as a coordination point for NADPH. The NADPH site is built by Val-249 and Glu-251.

This sequence belongs to the NAD-dependent glycerol-3-phosphate dehydrogenase family.

The protein resides in the cytoplasm. It catalyses the reaction sn-glycerol 3-phosphate + NAD(+) = dihydroxyacetone phosphate + NADH + H(+). The catalysed reaction is sn-glycerol 3-phosphate + NADP(+) = dihydroxyacetone phosphate + NADPH + H(+). Its pathway is membrane lipid metabolism; glycerophospholipid metabolism. Its function is as follows. Catalyzes the reduction of the glycolytic intermediate dihydroxyacetone phosphate (DHAP) to sn-glycerol 3-phosphate (G3P), the key precursor for phospholipid synthesis. This chain is Glycerol-3-phosphate dehydrogenase [NAD(P)+], found in Campylobacter jejuni subsp. jejuni serotype O:2 (strain ATCC 700819 / NCTC 11168).